Here is a 265-residue protein sequence, read N- to C-terminus: Cytochrome c oxidase subunit 3 (265 aa).

7 consecutive transmembrane segments (helical) span residues 16 to 36 (PWPISGSLGALATTVGGVMYM), 41 to 61 (GGATLLSLGLIFILYTMFVWW), 81 to 101 (GPRYGSISFIVSEVMFLFAFF), 137 to 157 (TPILLSSGAAVTWAHHAILAG), 162 to 182 (AVYALVATVSLALVFTGFQGM), 200 to 220 (FFLATGFHGFHVIIGTLFLII), and 245 to 265 (WHFVDVVRLFPFVSIYWWGGI).

Belongs to the cytochrome c oxidase subunit 3 family. Component of the cytochrome c oxidase (complex IV, CIV), a multisubunit enzyme composed of a catalytic core of 3 subunits and several supernumerary subunits. The complex exists as a monomer or a dimer and forms supercomplexes (SCs) in the inner mitochondrial membrane with ubiquinol-cytochrome c oxidoreductase (cytochrome b-c1 complex, complex III, CIII).

The protein resides in the mitochondrion inner membrane. The enzyme catalyses 4 Fe(II)-[cytochrome c] + O2 + 8 H(+)(in) = 4 Fe(III)-[cytochrome c] + 2 H2O + 4 H(+)(out). In terms of biological role, component of the cytochrome c oxidase, the last enzyme in the mitochondrial electron transport chain which drives oxidative phosphorylation. The respiratory chain contains 3 multisubunit complexes succinate dehydrogenase (complex II, CII), ubiquinol-cytochrome c oxidoreductase (cytochrome b-c1 complex, complex III, CIII) and cytochrome c oxidase (complex IV, CIV), that cooperate to transfer electrons derived from NADH and succinate to molecular oxygen, creating an electrochemical gradient over the inner membrane that drives transmembrane transport and the ATP synthase. Cytochrome c oxidase is the component of the respiratory chain that catalyzes the reduction of oxygen to water. Electrons originating from reduced cytochrome c in the intermembrane space (IMS) are transferred via the dinuclear copper A center (CU(A)) of subunit 2 and heme A of subunit 1 to the active site in subunit 1, a binuclear center (BNC) formed by heme A3 and copper B (CU(B)). The BNC reduces molecular oxygen to 2 water molecules using 4 electrons from cytochrome c in the IMS and 4 protons from the mitochondrial matrix. This is Cytochrome c oxidase subunit 3 (COX3) from Vicia faba (Broad bean).